The chain runs to 675 residues: UvrABC system protein B (675 aa).

The 388-residue stretch at 30 to 417 (SGIEQGNRNQ…SDQIVEQVVR (388 aa)) folds into the Helicase ATP-binding domain. Residue 43–50 (GVTGSGKT) participates in ATP binding. The Beta-hairpin motif lies at 96–119 (YYDYYQPEAYVPSSDTFIEKDAAI). The region spanning 434–601 (QVDDVLSEIN…AVRQKVKEID (168 aa)) is the Helicase C-terminal domain. One can recognise a UVR domain in the interval 637–672 (AKHMSKLEKEMLKASKELQFEQAARLRDEILRLKAQ).

It belongs to the UvrB family. As to quaternary structure, forms a heterotetramer with UvrA during the search for lesions. Interacts with UvrC in an incision complex.

It localises to the cytoplasm. Functionally, the UvrABC repair system catalyzes the recognition and processing of DNA lesions. A damage recognition complex composed of 2 UvrA and 2 UvrB subunits scans DNA for abnormalities. Upon binding of the UvrA(2)B(2) complex to a putative damaged site, the DNA wraps around one UvrB monomer. DNA wrap is dependent on ATP binding by UvrB and probably causes local melting of the DNA helix, facilitating insertion of UvrB beta-hairpin between the DNA strands. Then UvrB probes one DNA strand for the presence of a lesion. If a lesion is found the UvrA subunits dissociate and the UvrB-DNA preincision complex is formed. This complex is subsequently bound by UvrC and the second UvrB is released. If no lesion is found, the DNA wraps around the other UvrB subunit that will check the other stand for damage. The chain is UvrABC system protein B from Acinetobacter baylyi (strain ATCC 33305 / BD413 / ADP1).